The sequence spans 263 residues: Trans-2-decenoyl-[acyl-carrier-protein] isomerase (263 aa).

This sequence belongs to the enoyl-CoA hydratase/isomerase family. As to quaternary structure, homotetramer.

The enzyme catalyses (2E)-decenoyl-[ACP] = (3Z)-decenoyl-[ACP]. Its pathway is lipid metabolism; fatty acid biosynthesis. Functionally, catalyzes the isomerization of trans-2-decenoyl-ACP to cis-3-decenoyl-ACP. Required for survival at low pH. The chain is Trans-2-decenoyl-[acyl-carrier-protein] isomerase (fabM) from Streptococcus mutans serotype c (strain ATCC 700610 / UA159).